The sequence spans 785 residues: MQRSAKLKIRAPRKFSANQVDFATHWEVLQRAIGDIFQKSTSQLSFEELYRNAYILVLHKYGEKLYNHVQDVIRSRLKEETVPAIYKNYDASLLGNALLDIRKNDSYSTSWSRSLEAAHRFLSSLVNSWKDHIVSMQMISSVLKYLDKVYSKSADKVPVNENGIYIFREVVLLNSFEIGEKCVETILILVYLERKGNTINRPLINDCLDMLNSLPSENKKETLYDVLFAPKFLSYTRNFYEIESSTVIGVFGVVEYLKKAEKRFEEEKERSKNYLFTKIASPLLSVVEDELLSKHLDDLLENQSTGFFSMIDSSNFEGLQLVYESFSRVELGVKSLKKYLAKYVAHHGKLINETTSQALEGKMAVGRLSSNATMATLWVQKVLALWDRLNTIISTTMDADRSILNSLSDAFVTFVDGYTRAPEYISLFIDDNLKKDARKAIEGSIEATLQNSVTLFRFISEKDVFEKYYKTHLAKRLLNNRSISSDAELGMISRLKQEAGNVFTQKLEGMFNDMNLSQELLQEYKHNSALQSAKPALDLNVSILASTFWPIDLSPHKIKCNFPKVLLAQIDQFTDFYLSKHTGRKLLWYPSMGSADVRVNFKDRKYDLNVSTIASVILLLFQDLKENQCLIFEEILEKTNIEVGDLKRNLQSLACAKYKILLKDPKGREVNAGDKFYFNENFVSNLARIKISTVAQTRVEDDSERKRTLEKVDESRKHQADACIVRVMKDRKVCEHNQLMAEVTRQLNPRFHPSPMMIKRRIEALIEREYLQRQADNGRIYEYLA.

In terms of domain architecture, Cullin neddylation spans 715-777; the sequence is SRKHQADACI…REYLQRQADN (63 aa). Lysine 729 participates in a covalent cross-link: Glycyl lysine isopeptide (Lys-Gly) (interchain with G-Cter in NEDD8).

The protein belongs to the cullin family. Probable component of multiple cullin-RING-based BC3B (BTB-CUL3-BTB) E3 ubiquitin-protein ligase complexes formed by cul-3, rbx-1 and a variable BTB domain-containing protein as adapter and substrate recognition component. Interacts with btb1, btb2, btb3, nedd8 and pip1. In terms of processing, neddylated; enhancing the ubiquitin-ligase activity.

The protein localises to the cytoplasm. The protein operates within protein modification; protein ubiquitination. Functionally, probable core component of multiple cullin-RING-based BC3B (BTB-CUL3-BTB) E3 ubiquitin-protein ligase complexes which mediate the ubiquitination and subsequent proteasomal degradation of target proteins. As a scaffold protein may contribute to catalysis through positioning of the substrate and the ubiquitin-conjugating enzyme. The functional specificity of the BC3B complex depends on the substrate recognition component. Involved in ubiquitin-mediated degradation of btb3. This Schizosaccharomyces pombe (strain 972 / ATCC 24843) (Fission yeast) protein is Cullin-3 (cul3).